The following is a 214-amino-acid chain: tRNA (guanine-N(7)-)-methyltransferase (214 aa).

Positions 44, 69, 96, and 118 each coordinate S-adenosyl-L-methionine. Residue Asp118 is part of the active site. A substrate-binding site is contributed by Lys122. The interval 124–129 (RHEKRR) is interaction with RNA. Substrate-binding positions include Asp154 and 192 to 195 (TEYE).

Belongs to the class I-like SAM-binding methyltransferase superfamily. TrmB family.

It catalyses the reaction guanosine(46) in tRNA + S-adenosyl-L-methionine = N(7)-methylguanosine(46) in tRNA + S-adenosyl-L-homocysteine. The protein operates within tRNA modification; N(7)-methylguanine-tRNA biosynthesis. Functionally, catalyzes the formation of N(7)-methylguanine at position 46 (m7G46) in tRNA. The protein is tRNA (guanine-N(7)-)-methyltransferase of Lacticaseibacillus casei (strain BL23) (Lactobacillus casei).